We begin with the raw amino-acid sequence, 229 residues long: Ribosome maturation factor RimM (229 aa).

The segment at 1-39 is disordered; it reads MAGHDSGSAKRGRSPSFGVFVRKPVERAPTKGAGDGAAD. Residues 148–229 enclose the PRC barrel domain; the sequence is ADEFYWVDLI…RIVVDWEADY (82 aa).

Belongs to the RimM family. Binds ribosomal protein uS19.

The protein resides in the cytoplasm. Functionally, an accessory protein needed during the final step in the assembly of 30S ribosomal subunit, possibly for assembly of the head region. Essential for efficient processing of 16S rRNA. May be needed both before and after RbfA during the maturation of 16S rRNA. It has affinity for free ribosomal 30S subunits but not for 70S ribosomes. The chain is Ribosome maturation factor RimM from Burkholderia thailandensis (strain ATCC 700388 / DSM 13276 / CCUG 48851 / CIP 106301 / E264).